The sequence spans 176 residues: uncharacterized protein (176 aa).

This is an uncharacterized protein from Schizosaccharomyces pombe (strain 972 / ATCC 24843) (Fission yeast).